The sequence spans 329 residues: Tyrosine recombinase XerC 1 (329 aa).

The region spanning 14–101 (APPHPQIGAY…AWRGWYQWLA (88 aa)) is the Core-binding (CB) domain. One can recognise a Tyr recombinase domain in the interval 123–320 (RLPKALSVEQ…DFQHLAKIYD (198 aa)). Active-site residues include Arg163, Lys198, His272, Arg275, and His298. Tyr307 (O-(3'-phospho-DNA)-tyrosine intermediate) is an active-site residue.

Belongs to the 'phage' integrase family. XerC subfamily. Forms a cyclic heterotetrameric complex composed of two molecules of XerC and two molecules of XerD.

Its subcellular location is the cytoplasm. Its function is as follows. Site-specific tyrosine recombinase, which acts by catalyzing the cutting and rejoining of the recombining DNA molecules. The XerC-XerD complex is essential to convert dimers of the bacterial chromosome into monomers to permit their segregation at cell division. It also contributes to the segregational stability of plasmids. The chain is Tyrosine recombinase XerC 1 (xerC1) from Ralstonia nicotianae (strain ATCC BAA-1114 / GMI1000) (Ralstonia solanacearum).